Reading from the N-terminus, the 216-residue chain is GTP-binding nuclear protein Ran, testis-specific isoform (216 aa).

Position 2 is an N-acetylalanine (Ala-2). The 165-residue stretch at 7–171 (PQIQFKLVLV…FWLARKLIGD (165 aa)) folds into the Small GTPase Ran-type domain. 17 to 24 (GDGGTGKT) is a GTP binding site. At Thr-24 the chain carries Phosphothreonine. The segment at 37-45 (KEYVATLGV) is switch-I. Lys-60 carries the N6-acetyllysine modification. 65 to 69 (DTAGQ) is a GTP binding site. A switch-II region spans residues 68–84 (GQEKFGGLRDGYYIQAQ). Position 71 is an N6-acetyllysine; alternate (Lys-71). Lys-71 is covalently cross-linked (Glycyl lysine isopeptide (Lys-Gly) (interchain with G-Cter in SUMO2); alternate). A Glycyl lysine isopeptide (Lys-Gly) (interchain with G-Cter in ubiquitin); alternate cross-link involves residue Lys-71. Lys-99 bears the N6-acetyllysine mark. 122 to 125 (NKVD) is a GTP binding site. Lys-134 carries the post-translational modification N6-acetyllysine. Residue Lys-152 forms a Glycyl lysine isopeptide (Lys-Gly) (interchain with G-Cter in SUMO2) linkage. Lys-159 is modified (N6-acetyllysine; alternate). At Lys-159 the chain carries N6-succinyllysine; alternate.

Belongs to the small GTPase superfamily. Ran family. In terms of tissue distribution, testis specific.

It is found in the nucleus. The catalysed reaction is GTP + H2O = GDP + phosphate + H(+). Its function is as follows. GTP-binding protein involved in nucleocytoplasmic transport. Required for the import of protein into the nucleus and also for RNA export. Involved in chromatin condensation and control of cell cycle. In Rattus norvegicus (Rat), this protein is GTP-binding nuclear protein Ran, testis-specific isoform (Rasl2-9).